A 106-amino-acid chain; its full sequence is Nucleoid-associated protein XC_3243 (106 aa).

Residues 82–106 form a disordered region; it reads DAESKERMGSATAGMQLPPGMKLPF.

Belongs to the YbaB/EbfC family. As to quaternary structure, homodimer.

It is found in the cytoplasm. Its subcellular location is the nucleoid. Its function is as follows. Binds to DNA and alters its conformation. May be involved in regulation of gene expression, nucleoid organization and DNA protection. This is Nucleoid-associated protein XC_3243 from Xanthomonas campestris pv. campestris (strain 8004).